Here is a 344-residue protein sequence, read N- to C-terminus: GTP 3',8-cyclase (344 aa).

The Radical SAM core domain maps to 19 to 244 (PFGRTISYLR…MDLAESTGGP (226 aa)). Arg-28 contributes to the GTP binding site. [4Fe-4S] cluster is bound by residues Cys-35 and Cys-39. Tyr-41 serves as a coordination point for S-adenosyl-L-methionine. Cys-42 serves as a coordination point for [4Fe-4S] cluster. Arg-77 serves as a coordination point for GTP. Gly-81 serves as a coordination point for S-adenosyl-L-methionine. Thr-111 serves as a coordination point for GTP. Ser-135 provides a ligand contact to S-adenosyl-L-methionine. Lys-171 provides a ligand contact to GTP. Met-205 is a binding site for S-adenosyl-L-methionine. Positions 268 and 271 each coordinate [4Fe-4S] cluster. Residue 273-275 (RVR) coordinates GTP. A [4Fe-4S] cluster-binding site is contributed by Cys-285.

Belongs to the radical SAM superfamily. MoaA family. As to quaternary structure, monomer and homodimer. [4Fe-4S] cluster is required as a cofactor.

It carries out the reaction GTP + AH2 + S-adenosyl-L-methionine = (8S)-3',8-cyclo-7,8-dihydroguanosine 5'-triphosphate + 5'-deoxyadenosine + L-methionine + A + H(+). It participates in cofactor biosynthesis; molybdopterin biosynthesis. Catalyzes the cyclization of GTP to (8S)-3',8-cyclo-7,8-dihydroguanosine 5'-triphosphate. The chain is GTP 3',8-cyclase from Bradyrhizobium diazoefficiens (strain JCM 10833 / BCRC 13528 / IAM 13628 / NBRC 14792 / USDA 110).